A 387-amino-acid chain; its full sequence is Cytochrome b (387 aa).

4 helical membrane passes run 32 to 52 (FGSL…TLAM), 76 to 98 (WLVR…LHIG), 113 to 133 (VWAI…LGYV), and 179 to 199 (FFAL…MHLI). Heme b is bound by residues H82 and H96. Residues H183 and H197 each contribute to the heme b site. H202 contacts a ubiquinone. The next 4 helical transmembrane spans lie at 226–246 (YLFK…SFVF), 290–310 (LLGV…PITD), 322–342 (LSKF…KLGA), and 349–369 (FIEL…IIVP).

It belongs to the cytochrome b family. Fungal cytochrome b-c1 complex contains 10 subunits; 3 respiratory subunits, 2 core proteins and 5 low-molecular weight proteins. Cytochrome b-c1 complex is a homodimer. Heme b is required as a cofactor.

Its subcellular location is the mitochondrion inner membrane. In terms of biological role, component of the ubiquinol-cytochrome c reductase complex (complex III or cytochrome b-c1 complex) that is part of the mitochondrial respiratory chain. The b-c1 complex mediates electron transfer from ubiquinol to cytochrome c. Contributes to the generation of a proton gradient across the mitochondrial membrane that is then used for ATP synthesis. This is Cytochrome b (COB) from Podospora anserina (strain S / ATCC MYA-4624 / DSM 980 / FGSC 10383) (Pleurage anserina).